Reading from the N-terminus, the 409-residue chain is Phosphatidylglycerol--prolipoprotein diacylglyceryl transferase (409 aa).

Helical transmembrane passes span 18–38, 48–68, 93–113, and 119–139; these read PVPL…AVFV, MDPM…IVGA, IWNG…GAWL, and GISL…AQAI. Arg-141 contacts a 1,2-diacyl-sn-glycero-3-phospho-(1'-sn-glycerol). Helical transmembrane passes span 177–197 and 234–254; these read QPTF…LLVV and ILGL…ALLA. Residues 273 to 409 are disordered; sequence ALGIARSRPA…AVPPEEPQLP (137 aa). Composition is skewed to low complexity over residues 297-309, 320-335, and 348-375; these read AAAP…DSAA, PDLG…SAGS, and TATT…TATT.

Belongs to the Lgt family.

Its subcellular location is the cell membrane. It carries out the reaction L-cysteinyl-[prolipoprotein] + a 1,2-diacyl-sn-glycero-3-phospho-(1'-sn-glycerol) = an S-1,2-diacyl-sn-glyceryl-L-cysteinyl-[prolipoprotein] + sn-glycerol 1-phosphate + H(+). The protein operates within protein modification; lipoprotein biosynthesis (diacylglyceryl transfer). Its function is as follows. Catalyzes the transfer of the diacylglyceryl group from phosphatidylglycerol to the sulfhydryl group of the N-terminal cysteine of a prolipoprotein, the first step in the formation of mature lipoproteins. This Frankia casuarinae (strain DSM 45818 / CECT 9043 / HFP020203 / CcI3) protein is Phosphatidylglycerol--prolipoprotein diacylglyceryl transferase.